Here is a 992-residue protein sequence, read N- to C-terminus: Disks large-associated protein 1 (992 aa).

Disordered stretches follow at residues 154-209 (SLEG…SWWS) and 355-375 (KAMGDEDSGDSDTSPKPSPKV). Ser-169 is subject to Phosphoserine. The span at 195 to 209 (SNASNASPTSPSWWS) shows a compositional bias: low complexity. 13 positions are modified to phosphoserine: Ser-362, Ser-365, Ser-368, Ser-372, Ser-389, Ser-418, Ser-421, Ser-425, Ser-428, Ser-437, Ser-509, Ser-516, and Ser-578. Thr-579 bears the Phosphothreonine mark. A phosphoserine mark is found at Ser-581 and Ser-605. Position 606 is a phosphothreonine (Thr-606). Ser-608 and Ser-611 each carry phosphoserine. Interaction with DYL2 stretches follow at residues 665–676 (LSIGIQVDDAEE) and 687–698 (SKFQSVGVQVEE). The interval 914 to 980 (WKQMDPLDKK…QNSATESAES (67 aa)) is disordered. Basic and acidic residues-rich tracts occupy residues 918 to 927 (DPLDKKERRA) and 943 to 958 (IRERSLESSQRQEARK). Ser-947 bears the Phosphoserine mark. Over residues 969–978 (VRQNSATESA) the composition is skewed to polar residues. Positions 990–992 (TRL) match the PDZ-binding motif.

It belongs to the SAPAP family. Interacts with guanylate kinase-like domain of DLG1, DLG2, DLG3, DLG4 and AIP1. Interacts with the PDZ domain of SHANK1, SHANK2 and SHANK3. Found in a complex with DLG4 and SHANK1, SHANK2 or SHANK3. Found in a complex with DLG4 and BEGAIN. Interacts with DYL2 and LRFN1. Interacts with MPP2 (via the SH3-Guanylate kinase-like sub-module). Post-translationally, ubiquitinated by TRIM3; leading to proteasomal degradation. Expressed in brain and testis.

Its subcellular location is the cell membrane. The protein localises to the postsynaptic density. It localises to the synapse. In terms of biological role, part of the postsynaptic scaffold in neuronal cells. The polypeptide is Disks large-associated protein 1 (Rattus norvegicus (Rat)).